The primary structure comprises 807 residues: Glycerol-3-phosphate acyltransferase (807 aa).

Positions 308 to 313 match the HXXXXD motif motif; sequence CHRSHM.

It belongs to the GPAT/DAPAT family.

It localises to the cell inner membrane. The enzyme catalyses sn-glycerol 3-phosphate + an acyl-CoA = a 1-acyl-sn-glycero-3-phosphate + CoA. It participates in phospholipid metabolism; CDP-diacylglycerol biosynthesis; CDP-diacylglycerol from sn-glycerol 3-phosphate: step 1/3. The chain is Glycerol-3-phosphate acyltransferase from Shewanella sp. (strain ANA-3).